A 542-amino-acid chain; its full sequence is Esterase 6 (542 aa).

An N-terminal signal peptide occupies residues 1–19 (MNYVGLIIVLSCLWLGSNA). Asparagine 40 carries N-linked (GlcNAc...) asparagine glycosylation. Cysteines 84 and 103 form a disulfide. Residue serine 207 is the Acyl-ester intermediate of the active site. An intrachain disulfide couples cysteine 259 to cysteine 271. Asparagine 418 and asparagine 454 each carry an N-linked (GlcNAc...) asparagine glycan. Histidine 464 acts as the Charge relay system in catalysis. Residues cysteine 512 and cysteine 533 are joined by a disulfide bond.

This sequence belongs to the type-B carboxylesterase/lipase family. In terms of assembly, monomer.

It is found in the secreted. It catalyses the reaction a carboxylic ester + H2O = an alcohol + a carboxylate + H(+). Functionally, transferred from the ejaculatory bulbs of males to the female genitals upon copulation, plays an important role in the reproductive biology. The sequence is that of Esterase 6 (Est-6) from Drosophila simulans (Fruit fly).